We begin with the raw amino-acid sequence, 225 residues long: Superoxide dismutase [Mn], mitochondrial (225 aa).

A mitochondrion-targeting transit peptide spans 1-27 (MITAITRTALPRATLRTSLATMSTIRA). 4 residues coordinate Mn(2+): H53, H101, D187, and H191.

Belongs to the iron/manganese superoxide dismutase family. Requires Mn(2+) as cofactor.

It localises to the mitochondrion. The protein localises to the cytoplasm. It catalyses the reaction 2 superoxide + 2 H(+) = H2O2 + O2. Its function is as follows. Destroys radicals which are normally produced within the cells and which are toxic to biological systems. In terms of biological role, destroys mitochondrial radicals produced by oxidative stress. Destroys cytoplasmic radicals produced in low copper environments; a condition which inactivates the cytoplasmic copper-dependent superoxide dismutase SOD1. In Cryptococcus neoformans var. grubii serotype A (strain H99 / ATCC 208821 / CBS 10515 / FGSC 9487) (Filobasidiella neoformans var. grubii), this protein is Superoxide dismutase [Mn], mitochondrial.